The primary structure comprises 642 residues: Threonine--tRNA ligase (642 aa).

The TGS domain maps to 1 to 61 (MPVITLPDGS…HEDASLSIIT (61 aa)). The interval 243-534 (DHRKIGKQLD…LIEEYAGRFP (292 aa)) is catalytic. Zn(2+) contacts are provided by cysteine 334, histidine 385, and histidine 511.

It belongs to the class-II aminoacyl-tRNA synthetase family. Homodimer. The cofactor is Zn(2+).

It localises to the cytoplasm. It carries out the reaction tRNA(Thr) + L-threonine + ATP = L-threonyl-tRNA(Thr) + AMP + diphosphate + H(+). In terms of biological role, catalyzes the attachment of threonine to tRNA(Thr) in a two-step reaction: L-threonine is first activated by ATP to form Thr-AMP and then transferred to the acceptor end of tRNA(Thr). Also edits incorrectly charged L-seryl-tRNA(Thr). The polypeptide is Threonine--tRNA ligase (Shewanella amazonensis (strain ATCC BAA-1098 / SB2B)).